The primary structure comprises 542 residues: Protein OS-9 homolog (542 aa).

An N-terminal signal peptide occupies residues 1 to 21 (MQAKIIYALSAISALIPLGSS). N-linked (GlcNAc...) asparagine glycans are attached at residues Asn-52 and Asn-74. 4 cysteine pairs are disulfide-bonded: Cys-70–Cys-258, Cys-117–Cys-130, Cys-193–Cys-227, and Cys-208–Cys-239. One can recognise an MRH domain in the interval 115–241 (ERCIFYQAGF…QVTIPELCNL (127 aa)). The a mannooligosaccharide derivative site is built by Trp-125, Gln-137, Asp-194, Arg-200, Glu-223, and Tyr-229. N-linked (GlcNAc...) asparagine glycosylation is present at Asn-380. Positions 497-528 (NARMDDDESTSHTTRDIGEAGSQTTGNTESEV) are disordered. Residues 505-514 (STSHTTRDIG) are compositionally biased toward basic and acidic residues. Over residues 517-528 (GSQTTGNTESEV) the composition is skewed to polar residues. Positions 539–542 (HDEL) match the Prevents secretion from ER motif.

It belongs to the OS-9 family. As to quaternary structure, homodimer. Component of the HRD1 ubiquitin ligase complex which contains the E3 ligase HRD1, its cofactors HRD3, USA1 and DER1, substrate recruiting factor YOS9 and CDC48-binding protein UBX2. Within the complex, interacts (via N-terminus) with HRD3. In ERAD-L, HRD3 and YOS9 jointly bind misfolded glycoproteins in the endoplasmic reticulum (ER) lumen. Movement of ERAD-L substrates through the ER membrane is facilitated by HRD1 and DER1 which have lateral gates facing each other and which distort the membrane region between the lateral gates, making it much thinner than a normal phospholipid bilayer. Substrates insert into the membrane as a hairpin loop with one strand interacting with DER1 and the other with HRD1. The HRD1 complex interacts with the heterotrimeric CDC48-NPL4-UFD1 ATPase complex which is recruited by UBX2 via its interaction with CDC48 and which moves ubiquitinated substrates to the cytosol for targeting to the proteasome. Interacts with KAR2 and EMP47. Interacts with misfolded ER lumenal proteins like PCR1. Interacts with the GPI-anchored proteins GAS1 and MKC7.

It is found in the endoplasmic reticulum membrane. Lectin involved in the quality control of the secretory pathway. As a member of the endoplasmic reticulum-associated degradation lumenal (ERAD-L) surveillance system, targets misfolded endoplasmic reticulum lumenal glycoproteins for degradation. The recognition of targets is N-glycan specific. Functions in recruiting misfolded protein substrates in conjunction with HRD3. In Saccharomyces cerevisiae (strain ATCC 204508 / S288c) (Baker's yeast), this protein is Protein OS-9 homolog (YOS9).